Reading from the N-terminus, the 305-residue chain is Protoheme IX farnesyltransferase (305 aa).

9 helical membrane-spanning segments follow: residues Val-31–His-51, Pro-52–Ile-72, Ala-102–Leu-119, Leu-123–Lys-145, Asn-151–Ser-171, Ile-179–Phe-199, Ile-218–Met-238, Phe-240–Phe-260, and Phe-281–Ile-301.

It belongs to the UbiA prenyltransferase family. Protoheme IX farnesyltransferase subfamily.

Its subcellular location is the cell inner membrane. The enzyme catalyses heme b + (2E,6E)-farnesyl diphosphate + H2O = Fe(II)-heme o + diphosphate. Its pathway is porphyrin-containing compound metabolism; heme O biosynthesis; heme O from protoheme: step 1/1. Its function is as follows. Converts heme B (protoheme IX) to heme O by substitution of the vinyl group on carbon 2 of heme B porphyrin ring with a hydroxyethyl farnesyl side group. This is Protoheme IX farnesyltransferase from Rickettsia akari (strain Hartford).